A 245-amino-acid polypeptide reads, in one-letter code: PF03932 family protein CutC (245 aa).

This sequence belongs to the CutC family.

The protein resides in the cytoplasm. This is PF03932 family protein CutC from Rhizobium meliloti (strain 1021) (Ensifer meliloti).